A 61-amino-acid polypeptide reads, in one-letter code: Metallothionein-2B (61 aa).

Met1 carries the N-acetylmethionine modification. Residues 1–29 (MDPNCSCAAGGSCTCAGSCKCKDCRCTSC) are beta. Residues Cys5, Cys7, Cys13, Cys15, Cys19, Cys21, Cys24, Cys26, Cys29, Cys33, Cys34, Cys36, Cys37, Cys41, Cys44, Cys48, Cys50, Cys57, Cys59, and Cys60 each coordinate a divalent metal cation. Residues 30-61 (KKSCCSCCPAGCARCAQGCICKGASDKCSCCA) form an alpha region.

It belongs to the metallothionein superfamily. Type 1 family. As to quaternary structure, monomer.

Functionally, metallothioneins have a high content of cysteine residues that bind various heavy metals; these proteins are transcriptionally regulated by both heavy metals and glucocorticoids. The sequence is that of Metallothionein-2B (MT2B) from Sus scrofa (Pig).